Consider the following 131-residue polypeptide: Fumarate reductase subunit C (131 aa).

A run of 3 helical transmembrane segments spans residues 30 to 50 (EGTA…LFAL), 57 to 77 (WMGF…LITL), and 109 to 129 (IIKG…YVAL).

It belongs to the FrdC family. As to quaternary structure, part of an enzyme complex containing four subunits: a flavoprotein (FrdA), an iron-sulfur protein (FrdB), and two hydrophobic anchor proteins (FrdC and FrdD).

Its subcellular location is the cell inner membrane. Functionally, two distinct, membrane-bound, FAD-containing enzymes are responsible for the catalysis of fumarate and succinate interconversion; fumarate reductase is used in anaerobic growth, and succinate dehydrogenase is used in aerobic growth. Anchors the catalytic components of the fumarate reductase complex to the cell inner membrane, binds quinones. The chain is Fumarate reductase subunit C from Salmonella heidelberg (strain SL476).